The sequence spans 430 residues: Serine--tRNA ligase (430 aa).

235-237 contributes to the L-serine binding site; sequence TAE. ATP contacts are provided by residues 266 to 268 and Val-282; that span reads RRE. Residue Glu-289 participates in L-serine binding. Position 353 to 356 (353 to 356) interacts with ATP; the sequence is EASS. Ser-389 is an L-serine binding site.

This sequence belongs to the class-II aminoacyl-tRNA synthetase family. Type-1 seryl-tRNA synthetase subfamily. As to quaternary structure, homodimer. The tRNA molecule binds across the dimer.

It localises to the cytoplasm. It catalyses the reaction tRNA(Ser) + L-serine + ATP = L-seryl-tRNA(Ser) + AMP + diphosphate + H(+). The catalysed reaction is tRNA(Sec) + L-serine + ATP = L-seryl-tRNA(Sec) + AMP + diphosphate + H(+). The protein operates within aminoacyl-tRNA biosynthesis; selenocysteinyl-tRNA(Sec) biosynthesis; L-seryl-tRNA(Sec) from L-serine and tRNA(Sec): step 1/1. Catalyzes the attachment of serine to tRNA(Ser). Is also able to aminoacylate tRNA(Sec) with serine, to form the misacylated tRNA L-seryl-tRNA(Sec), which will be further converted into selenocysteinyl-tRNA(Sec). This is Serine--tRNA ligase from Chlorobium luteolum (strain DSM 273 / BCRC 81028 / 2530) (Pelodictyon luteolum).